The primary structure comprises 417 residues: Exodeoxyribonuclease 7 large subunit (417 aa).

The protein belongs to the XseA family. Heterooligomer composed of large and small subunits.

The protein localises to the cytoplasm. The catalysed reaction is Exonucleolytic cleavage in either 5'- to 3'- or 3'- to 5'-direction to yield nucleoside 5'-phosphates.. In terms of biological role, bidirectionally degrades single-stranded DNA into large acid-insoluble oligonucleotides, which are then degraded further into small acid-soluble oligonucleotides. This is Exodeoxyribonuclease 7 large subunit from Helicobacter hepaticus (strain ATCC 51449 / 3B1).